The primary structure comprises 31 residues: Delta-actitoxin-Dar1b (31 aa).

Belongs to the sea anemone short toxin (type III) family. Post-translationally, contains 4 disulfide bonds.

It is found in the secreted. It localises to the nematocyst. Functionally, binds specifically to voltage-gated sodium channels (Nav), thereby delaying their inactivation during signal transduction. In Dofleinia armata (Armed anemone), this protein is Delta-actitoxin-Dar1b.